Consider the following 689-residue polypeptide: MAQVEKRGGLLRKSSASKKPLKEKVVLMYDEIFMTEDPSKCSPRFWEELFLMKVNLEYLEGKLESLDGEELMKIKDNINCLFQHCIQALGEEHPIRVVNALQTLCALIRGVHQKNKSTSGFDIINMLMGFDKAELCMKNLMESLDSLLCAEGSESLKSLCLKLLLCLVTVTDNISQNTILEYVMINSIFEAILQILSHPPSRREHGYDAVVLLALLVNYRKYESVNPYIVKLSIVDDEATLNGMGLVIAQALSEYNRQYKDKEEEHQSGFFSALTNMVGSMFIADAHEKISVQTNEAILLALYEAVHLNRNFITVLAQSHPEMGLVTTPVSPAPTTPVTPLGTTPPSSDVISSVELPLDADVQTSNLLITFLKYSSIVMQDTKDEHRLHSGKLCLIILTCIAEDQYANAFLHDDNMNFRVNLHRMPMRHRKKAADKNLPCRPLVCAVLDLMVEFIVTHMMKEFPMDLYIRCIQVVHKLLCYQKKCRVRLHYTWRELWSALINLLKFLMSNETVLLAKHNIFTLALMIVNLFNMFITYGDTFLPTPSSYDELYYEIIRMHQSFDNLYSMVLRLSTNAGQWKEAASKVTHALVNIRAIINHFNPKIESYAAVNHISQLSEEQVLEVVRANYDTLTLKLQDGLDQYERYSEQHKEAAFFKELVRSISTNVRRNLAFHTLSQEVLLKEFSTIS.

The chain crosses the membrane as a helical span at residues 520–538 (IFTLALMIVNLFNMFITYG).

Belongs to the ARMH3 family. Interacts with PI4KB. Interacts with GBF1.

The protein resides in the golgi apparatus membrane. It is found in the cytoplasm. Its function is as follows. Involved in GBF1 recruitment, Golgi maintenance and protein secretion. This is Armadillo-like helical domain-containing protein 3 from Homo sapiens (Human).